The sequence spans 452 residues: tRNA-2-methylthio-N(6)-dimethylallyladenosine synthase (452 aa).

The 116-residue stretch at 3 to 118 (KKVFIKTYGC…LPQLLAERER (116 aa)) folds into the MTTase N-terminal domain. 6 residues coordinate [4Fe-4S] cluster: C12, C49, C81, C155, C159, and C162. Positions 141-379 (RVEGASAFVS…QTVINDSIKR (239 aa)) constitute a Radical SAM core domain. The TRAM domain maps to 382–445 (ESRLGTVQRI…SFTLRGEVVT (64 aa)).

This sequence belongs to the methylthiotransferase family. MiaB subfamily. As to quaternary structure, monomer. [4Fe-4S] cluster serves as cofactor.

The protein resides in the cytoplasm. It catalyses the reaction N(6)-dimethylallyladenosine(37) in tRNA + (sulfur carrier)-SH + AH2 + 2 S-adenosyl-L-methionine = 2-methylsulfanyl-N(6)-dimethylallyladenosine(37) in tRNA + (sulfur carrier)-H + 5'-deoxyadenosine + L-methionine + A + S-adenosyl-L-homocysteine + 2 H(+). In terms of biological role, catalyzes the methylthiolation of N6-(dimethylallyl)adenosine (i(6)A), leading to the formation of 2-methylthio-N6-(dimethylallyl)adenosine (ms(2)i(6)A) at position 37 in tRNAs that read codons beginning with uridine. The sequence is that of tRNA-2-methylthio-N(6)-dimethylallyladenosine synthase from Albidiferax ferrireducens (strain ATCC BAA-621 / DSM 15236 / T118) (Rhodoferax ferrireducens).